Here is a 128-residue protein sequence, read N- to C-terminus: Large ribosomal subunit protein uL22 (128 aa).

This sequence belongs to the universal ribosomal protein uL22 family. Part of the 50S ribosomal subunit.

In terms of biological role, this protein binds specifically to 23S rRNA; its binding is stimulated by other ribosomal proteins, e.g. L4, L17, and L20. It is important during the early stages of 50S assembly. It makes multiple contacts with different domains of the 23S rRNA in the assembled 50S subunit and ribosome. Functionally, the globular domain of the protein is located near the polypeptide exit tunnel on the outside of the subunit, while an extended beta-hairpin is found that lines the wall of the exit tunnel in the center of the 70S ribosome. The polypeptide is Large ribosomal subunit protein uL22 (Prochlorococcus marinus (strain MIT 9515)).